The sequence spans 342 residues: Anthranilate phosphoribosyltransferase (342 aa).

5-phospho-alpha-D-ribose 1-diphosphate is bound by residues Gly-79, 82 to 83 (GD), Thr-87, 89 to 92 (NIST), 107 to 115 (KHCNQRISS), and Ser-119. Residue Gly-79 coordinates anthranilate. Residue Ser-91 coordinates Mg(2+). Residue Asn-110 coordinates anthranilate. Arg-165 contributes to the anthranilate binding site. Asp-223 and Glu-224 together coordinate Mg(2+).

It belongs to the anthranilate phosphoribosyltransferase family. In terms of assembly, homodimer. Mg(2+) serves as cofactor.

It catalyses the reaction N-(5-phospho-beta-D-ribosyl)anthranilate + diphosphate = 5-phospho-alpha-D-ribose 1-diphosphate + anthranilate. It functions in the pathway amino-acid biosynthesis; L-tryptophan biosynthesis; L-tryptophan from chorismate: step 2/5. Its function is as follows. Catalyzes the transfer of the phosphoribosyl group of 5-phosphorylribose-1-pyrophosphate (PRPP) to anthranilate to yield N-(5'-phosphoribosyl)-anthranilate (PRA). This chain is Anthranilate phosphoribosyltransferase, found in Buchnera aphidicola subsp. Acyrthosiphon pisum (strain 5A).